The chain runs to 482 residues: Anthocyanin 3'-O-beta-glucosyltransferase (482 aa).

Residue His16 is the Proton acceptor of the active site. His16 serves as a coordination point for an anthocyanidin. The active-site Charge relay is the Asp119. 7 residues coordinate UDP-alpha-D-glucose: Ala349, Gln351, His366, Trp369, Asn370, Ser371, and Glu374. Residue Ala389 coordinates an anthocyanidin. Glu390 and Gln391 together coordinate UDP-alpha-D-glucose.

This sequence belongs to the UDP-glycosyltransferase family. The N-terminus is blocked. As to expression, abundant in petals and barely detected in leaves.

The catalysed reaction is delphinidin 3,5-bis-O-beta-D-glucoside + UDP-alpha-D-glucose = delphinidin 3,3',5-tri-O-beta-D-glucoside + UDP + H(+). Functionally, specifically glucosylates the 3'-hydroxy group of delphinidin 3,5-di-O-glucoside to produce gentiodelphin. Shows a strict specificity for UDP-glucose as donor. This chain is Anthocyanin 3'-O-beta-glucosyltransferase, found in Gentiana triflora (Clustered gentian).